We begin with the raw amino-acid sequence, 234 residues long: Glycerol uptake facilitator protein (234 aa).

6 helical membrane passes run 9-29 (FLGTLILILLGNGVVAGVVLP), 37-57 (GWIVITMGWGIAVAVAVFVSG), 61-81 (PAYLNPAVTIGVALKGGLPWA), 83-103 (VLPYILAQFAGAMLGQILVWL), 135-155 (LISEILGTFVLVLTIFALGLY), and 159-179 (AGIGTFAVGTLIVGIGLSLGG). An NPA 1 motif is present at residues 65 to 67 (NPA). The NPA 2 signature appears at 186–188 (NPA). Residues 214–234 (WIPVVGPVIGAALAVLVFSLF) form a helical membrane-spanning segment.

It belongs to the MIP/aquaporin (TC 1.A.8) family.

It is found in the cell membrane. It catalyses the reaction glycerol(in) = glycerol(out). Mediates glycerol diffusion across the cytoplasmic membrane via a pore-type mechanism. The protein is Glycerol uptake facilitator protein (glpF) of Streptococcus pneumoniae serotype 4 (strain ATCC BAA-334 / TIGR4).